A 216-amino-acid polypeptide reads, in one-letter code: UDP-N-acetylbacillosamine N-acetyltransferase (216 aa).

The Proton acceptor role is filled by histidine 137. Histidine 146 contacts acetyl-CoA.

This sequence belongs to the transferase hexapeptide repeat family. Forms oligomers.

The catalysed reaction is UDP-N-acetylbacillosamine + acetyl-CoA = UDP-N,N'-diacetylbacillosamine + CoA + H(+). Functionally, catalyzes the conversion of UDP-2,4,6-trideoxy-2-acetamido-4-amino glucose to UDP-2,4,6-trideoxy-2,4-diacetamido glucose, commonly known as UDP-N,N'-diacetylbacillosamine (UDP-diNAcBac). This chain is UDP-N-acetylbacillosamine N-acetyltransferase, found in Bacillus subtilis (strain 168).